Reading from the N-terminus, the 362-residue chain is Histidinol-phosphate aminotransferase 2 (362 aa).

At K222 the chain carries N6-(pyridoxal phosphate)lysine.

The protein belongs to the class-II pyridoxal-phosphate-dependent aminotransferase family. Histidinol-phosphate aminotransferase subfamily. As to quaternary structure, homodimer. Pyridoxal 5'-phosphate is required as a cofactor.

The catalysed reaction is L-histidinol phosphate + 2-oxoglutarate = 3-(imidazol-4-yl)-2-oxopropyl phosphate + L-glutamate. It functions in the pathway amino-acid biosynthesis; L-histidine biosynthesis; L-histidine from 5-phospho-alpha-D-ribose 1-diphosphate: step 7/9. This Carboxydothermus hydrogenoformans (strain ATCC BAA-161 / DSM 6008 / Z-2901) protein is Histidinol-phosphate aminotransferase 2.